Consider the following 332-residue polypeptide: Anthranilate phosphoribosyltransferase (332 aa).

5-phospho-alpha-D-ribose 1-diphosphate contacts are provided by residues Gly-79, 82 to 83 (GD), Ser-87, 89 to 92 (NIST), 107 to 115 (KHGNRSVSS), and Ser-119. Residue Gly-79 participates in anthranilate binding. A Mg(2+)-binding site is contributed by Ser-91. Anthranilate is bound at residue Asn-110. Anthranilate is bound at residue Arg-165. Mg(2+) is bound by residues Asp-223 and Glu-224.

This sequence belongs to the anthranilate phosphoribosyltransferase family. As to quaternary structure, homodimer. The cofactor is Mg(2+).

The catalysed reaction is N-(5-phospho-beta-D-ribosyl)anthranilate + diphosphate = 5-phospho-alpha-D-ribose 1-diphosphate + anthranilate. The protein operates within amino-acid biosynthesis; L-tryptophan biosynthesis; L-tryptophan from chorismate: step 2/5. Its function is as follows. Catalyzes the transfer of the phosphoribosyl group of 5-phosphorylribose-1-pyrophosphate (PRPP) to anthranilate to yield N-(5'-phosphoribosyl)-anthranilate (PRA). In Serratia proteamaculans (strain 568), this protein is Anthranilate phosphoribosyltransferase.